A 126-amino-acid chain; its full sequence is Small ribosomal subunit protein eS6 (126 aa).

The protein belongs to the eukaryotic ribosomal protein eS6 family.

This Thermococcus sibiricus (strain DSM 12597 / MM 739) protein is Small ribosomal subunit protein eS6.